A 208-amino-acid chain; its full sequence is Thymidylate kinase (208 aa).

10 to 17 (GPEGSGKT) serves as a coordination point for ATP.

It belongs to the thymidylate kinase family.

It catalyses the reaction dTMP + ATP = dTDP + ADP. Its function is as follows. Phosphorylation of dTMP to form dTDP in both de novo and salvage pathways of dTTP synthesis. The protein is Thymidylate kinase of Bacillus cereus (strain ATCC 10987 / NRS 248).